The primary structure comprises 807 residues: Histone transcription regulator slm9 (807 aa).

2 WD repeats span residues 62-100 (SFDSPISCIRFTYDGSCLAVATEAGTFLYHSEKWDKAFQ) and 102-140 (LSGPAYEVCWSQQGHILATSWKQISIYVKDEGLRTETIV). A disordered region spans residues 144-164 (EHADSNHQPAVSIEESKEAVE). WD repeat units lie at residues 182–221 (GHHTFVGGLAFDPMGQFLASQSFDHTLKVWKLSTFGVEKS), 230–273 (PTGN…YDIN), 276–322 (GHQG…PMAV), and 326–367 (LSCS…EKMD). The interval 388 to 437 (NKNAAADRTTSPTQGQPESPSKSILLRPPPSIASSPESKRRKCPKKFVAR) is disordered. Polar residues predominate over residues 395 to 409 (RTTSPTQGQPESPSK). Phosphoserine occurs at positions 406, 421, and 422. Basic residues predominate over residues 426–435 (KRRKCPKKFV). 2 WD repeats span residues 492–526 (DCSWFSYLPNAIVLANGTSVFWAVATEDSSIYIYS) and 528–574 (AGRL…AIHS).

Belongs to the WD repeat HIR1 family. In terms of assembly, interacts with hip1 and hip3.

Its subcellular location is the cytoplasm. The protein localises to the nucleus. In terms of biological role, probably required for replication-independent chromatin assembly. Required for transcriptional silencing in the outer repeat (otr) centromeric repeats and the Tf2 long terminal repeat retrotransposons. May play an indirect role in the regulation of cdc2 and/or wee1 at the G2/M stage of mitosis. The chain is Histone transcription regulator slm9 (slm9) from Schizosaccharomyces pombe (strain 972 / ATCC 24843) (Fission yeast).